The primary structure comprises 289 residues: uncharacterized protein (289 aa).

Transmembrane regions (helical) follow at residues 7–27, 33–53, 65–85, 92–112, 123–143, 148–168, 182–202, 212–232, 241–261, and 265–285; these read LLLA…KIGL, FNLA…WVFW, WLHL…FQFL, ATNA…WGLV, GVFL…LEFF, IFGD…TVLG, AYAF…SGFA, VAAL…VWYY, SVAV…FYAL, and PDFF…LTTA. EamA domains are found at residues 14–136 and 159–285; these read LIWA…LIVS and FLWA…LTTA.

It belongs to the EamA transporter family.

It is found in the cell membrane. This is an uncharacterized protein from Archaeoglobus fulgidus (strain ATCC 49558 / DSM 4304 / JCM 9628 / NBRC 100126 / VC-16).